A 444-amino-acid chain; its full sequence is Histidinol dehydrogenase (444 aa).

Residues Tyr-135, Gln-199, and Asn-227 each coordinate NAD(+). Positions 250, 272, and 275 each coordinate substrate. Residues Gln-272 and His-275 each contribute to the Zn(2+) site. Active-site proton acceptor residues include Glu-341 and His-342. 4 residues coordinate substrate: His-342, Asp-375, Glu-429, and His-434. Asp-375 contributes to the Zn(2+) binding site. His-434 contributes to the Zn(2+) binding site.

This sequence belongs to the histidinol dehydrogenase family. Zn(2+) serves as cofactor.

It catalyses the reaction L-histidinol + 2 NAD(+) + H2O = L-histidine + 2 NADH + 3 H(+). The protein operates within amino-acid biosynthesis; L-histidine biosynthesis; L-histidine from 5-phospho-alpha-D-ribose 1-diphosphate: step 9/9. Functionally, catalyzes the sequential NAD-dependent oxidations of L-histidinol to L-histidinaldehyde and then to L-histidine. The polypeptide is Histidinol dehydrogenase (hisD) (Mycobacterium bovis (strain ATCC BAA-935 / AF2122/97)).